The sequence spans 242 residues: Ribonuclease PH (242 aa).

Residues Arg90 and 128 to 130 each bind phosphate; that span reads GTR.

The protein belongs to the RNase PH family. As to quaternary structure, homohexameric ring arranged as a trimer of dimers.

The catalysed reaction is tRNA(n+1) + phosphate = tRNA(n) + a ribonucleoside 5'-diphosphate. Phosphorolytic 3'-5' exoribonuclease that plays an important role in tRNA 3'-end maturation. Removes nucleotide residues following the 3'-CCA terminus of tRNAs; can also add nucleotides to the ends of RNA molecules by using nucleoside diphosphates as substrates, but this may not be physiologically important. Probably plays a role in initiation of 16S rRNA degradation (leading to ribosome degradation) during starvation. This is Ribonuclease PH from Nocardioides sp. (strain ATCC BAA-499 / JS614).